A 227-amino-acid polypeptide reads, in one-letter code: MPYPLQLGLQDATSPIMEELTHFHDHTLMIVFLISSLVLYIISSMLTTKLTHTSTMDAQEVETIWTILPAMILILIALPSLRILYMMDEINDPSLTVKTMGHQWYWSYEYTDYEDLTFDSYMIPTNDLEPGQLRLLEVDNRVVLPMEMPIRMLISSEDVLHSWAIPSMGLKTDAIPGRLNQATLMSSRPGLFYGQCSEICGSNHSFMPIVLELVPLKYFEDWSASLL.

Topologically, residues 1–14 (MPYPLQLGLQDATS) are mitochondrial intermembrane. The helical transmembrane segment at 15-45 (PIMEELTHFHDHTLMIVFLISSLVLYIISSM) threads the bilayer. The Mitochondrial matrix segment spans residues 46-59 (LTTKLTHTSTMDAQ). A helical transmembrane segment spans residues 60 to 87 (EVETIWTILPAMILILIALPSLRILYMM). The Mitochondrial intermembrane portion of the chain corresponds to 88-227 (DEINDPSLTV…YFEDWSASLL (140 aa)). Cu cation-binding residues include histidine 161, cysteine 196, glutamate 198, cysteine 200, histidine 204, and methionine 207. Glutamate 198 lines the Mg(2+) pocket.

The protein belongs to the cytochrome c oxidase subunit 2 family. In terms of assembly, component of the cytochrome c oxidase (complex IV, CIV), a multisubunit enzyme composed of 14 subunits. The complex is composed of a catalytic core of 3 subunits MT-CO1, MT-CO2 and MT-CO3, encoded in the mitochondrial DNA, and 11 supernumerary subunits COX4I, COX5A, COX5B, COX6A, COX6B, COX6C, COX7A, COX7B, COX7C, COX8 and NDUFA4, which are encoded in the nuclear genome. The complex exists as a monomer or a dimer and forms supercomplexes (SCs) in the inner mitochondrial membrane with NADH-ubiquinone oxidoreductase (complex I, CI) and ubiquinol-cytochrome c oxidoreductase (cytochrome b-c1 complex, complex III, CIII), resulting in different assemblies (supercomplex SCI(1)III(2)IV(1) and megacomplex MCI(2)III(2)IV(2)). Found in a complex with TMEM177, COA6, COX18, COX20, SCO1 and SCO2. Interacts with TMEM177 in a COX20-dependent manner. Interacts with COX20. Interacts with COX16. Requires Cu cation as cofactor.

Its subcellular location is the mitochondrion inner membrane. The enzyme catalyses 4 Fe(II)-[cytochrome c] + O2 + 8 H(+)(in) = 4 Fe(III)-[cytochrome c] + 2 H2O + 4 H(+)(out). Functionally, component of the cytochrome c oxidase, the last enzyme in the mitochondrial electron transport chain which drives oxidative phosphorylation. The respiratory chain contains 3 multisubunit complexes succinate dehydrogenase (complex II, CII), ubiquinol-cytochrome c oxidoreductase (cytochrome b-c1 complex, complex III, CIII) and cytochrome c oxidase (complex IV, CIV), that cooperate to transfer electrons derived from NADH and succinate to molecular oxygen, creating an electrochemical gradient over the inner membrane that drives transmembrane transport and the ATP synthase. Cytochrome c oxidase is the component of the respiratory chain that catalyzes the reduction of oxygen to water. Electrons originating from reduced cytochrome c in the intermembrane space (IMS) are transferred via the dinuclear copper A center (CU(A)) of subunit 2 and heme A of subunit 1 to the active site in subunit 1, a binuclear center (BNC) formed by heme A3 and copper B (CU(B)). The BNC reduces molecular oxygen to 2 water molecules using 4 electrons from cytochrome c in the IMS and 4 protons from the mitochondrial matrix. This chain is Cytochrome c oxidase subunit 2 (MT-CO2), found in Dugong dugon (Dugong).